The sequence spans 283 residues: 4-hydroxybenzoate octaprenyltransferase (283 aa).

Transmembrane regions (helical) follow at residues 16–36 (PIGT…AGAG), 40–60 (LRIV…GCVI), 85–105 (ISAT…FGLV), 108–128 (LNTE…LYPF), 135–155 (LPQI…FTAL), 160–180 (WFIA…YDTE), 204–224 (FDRL…GWIL), 226–246 (LITV…LFAY), and 263–283 (FLHN…HYWF).

It belongs to the UbiA prenyltransferase family. Mg(2+) is required as a cofactor.

The protein localises to the cell inner membrane. The enzyme catalyses all-trans-octaprenyl diphosphate + 4-hydroxybenzoate = 4-hydroxy-3-(all-trans-octaprenyl)benzoate + diphosphate. It functions in the pathway cofactor biosynthesis; ubiquinone biosynthesis. Catalyzes the prenylation of para-hydroxybenzoate (PHB) with an all-trans polyprenyl group. Mediates the second step in the final reaction sequence of ubiquinone-8 (UQ-8) biosynthesis, which is the condensation of the polyisoprenoid side chain with PHB, generating the first membrane-bound Q intermediate 3-octaprenyl-4-hydroxybenzoate. The chain is 4-hydroxybenzoate octaprenyltransferase from Idiomarina loihiensis (strain ATCC BAA-735 / DSM 15497 / L2-TR).